A 430-amino-acid polypeptide reads, in one-letter code: tRNA pseudouridine synthase Pus10 (430 aa).

Asp-253 (nucleophile) is an active-site residue. 2 residues coordinate substrate: Tyr-320 and Tyr-392.

It belongs to the pseudouridine synthase Pus10 family.

The enzyme catalyses uridine(54) in tRNA = pseudouridine(54) in tRNA. The catalysed reaction is uridine(55) in tRNA = pseudouridine(55) in tRNA. In terms of biological role, responsible for synthesis of pseudouridine from uracil-54 and uracil-55 in the psi GC loop of transfer RNAs. This chain is tRNA pseudouridine synthase Pus10, found in Ignisphaera aggregans (strain DSM 17230 / JCM 13409 / AQ1.S1).